The following is a 906-amino-acid chain: Cadherin-2 (906 aa).

Positions 1-25 are cleaved as a signal peptide; sequence MCRIVGAPRTLLPLLAALLQASVEA. Residues 26–159 constitute a propeptide that is removed on maturation; it reads SGGIALCKTG…HNGHLQRQKR (134 aa). Residues serine 96 and serine 135 each carry the phosphoserine modification. Cadherin domains lie at 160-267, 268-382, 383-497, 498-603, and 604-714; these read DWVI…RPEF, LHQV…PPEF, TAMS…NPYF, APNP…DNAP, and QVVP…DVDR. The Extracellular portion of the chain corresponds to 160 to 724; sequence DWVIPPINLP…IVGAGLGTGA (565 aa). Glutamate 170 serves as a coordination point for Ca(2+). Residue asparagine 190 is glycosylated (N-linked (GlcNAc...) asparagine). Ca(2+)-binding residues include aspartate 226, glutamate 228, aspartate 259, methionine 260, asparagine 261, aspartate 262, and asparagine 263. N-linked (GlcNAc...) asparagine glycosylation occurs at asparagine 273. Ca(2+) contacts are provided by aspartate 293, aspartate 295, and asparagine 301. An N-linked (GlcNAc...) asparagine glycan is attached at asparagine 325. Aspartate 353 is a Ca(2+) binding site. 5 N-linked (GlcNAc...) asparagine glycosylation sites follow: asparagine 402, asparagine 572, asparagine 622, asparagine 651, and asparagine 692. The helical transmembrane segment at 725–745 threads the bilayer; the sequence is IIAILLCIIILLILVLMFVVW. The Cytoplasmic segment spans residues 746-906; that stretch reads MKRRDKERQA…LADMYGGGDD (161 aa). Over residues 863 to 880 the composition is skewed to low complexity; the sequence is SGSTAGSLSSLNSSSSGG. The segment at 863 to 884 is disordered; that stretch reads SGSTAGSLSSLNSSSSGGEQDY.

In terms of assembly, homodimer (via extracellular region). Can also form heterodimers with other cadherins (via extracellular region). Dimerization occurs in trans, i.e. with a cadherin chain from another cell. Interacts with CDCP1. Interacts with PCDH8; this complex may also include TAOK2. The interaction with PCDH8 may lead to internalization through TAOK2/p38 MAPK pathway. Identified in a complex containing FGFR4, NCAM1, CDH2, PLCG1, FRS2, SRC, SHC1, GAP43 and CTTN. May interact with OBSCN (via protein kinase domain 2). Interacts with FBXO45. In terms of processing, cleaved by MMP24. Ectodomain cleavage leads to the generation of a soluble 90 kDa N-terminal soluble fragment and a 45 kDa membrane-bound C-terminal fragment 1 (CTF1), which is further cleaved by gamma-secretase into a 35 kDa. Cleavage in neural stem cells by MMP24 affects CDH2-mediated anchorage of neural stem cells to ependymocytes in the adult subependymal zone, leading to modulate neural stem cell quiescence. May be phosphorylated by OBSCN.

It is found in the cell membrane. Its subcellular location is the sarcolemma. The protein resides in the cell junction. The protein localises to the cell surface. It localises to the desmosome. It is found in the adherens junction. Functionally, calcium-dependent cell adhesion protein; preferentially mediates homotypic cell-cell adhesion by dimerization with a CDH2 chain from another cell. Cadherins may thus contribute to the sorting of heterogeneous cell types. Acts as a regulator of neural stem cells quiescence by mediating anchorage of neural stem cells to ependymocytes in the adult subependymal zone: upon cleavage by MMP24, CDH2-mediated anchorage is affected, leading to modulate neural stem cell quiescence. Plays a role in cell-to-cell junction formation between pancreatic beta cells and neural crest stem (NCS) cells, promoting the formation of processes by NCS cells. CDH2 may be involved in neuronal recognition mechanism. In hippocampal neurons, may regulate dendritic spine density. The chain is Cadherin-2 (CDH2) from Rhinolophus ferrumequinum (Greater horseshoe bat).